Consider the following 174-residue polypeptide: Flavodoxin 1 (174 aa).

The region spanning 4 to 168 (IGIFYGSSSG…RLERWIAVLQ (165 aa)) is the Flavodoxin-like domain. FMN is bound by residues 10 to 14 (SSSGV) and 89 to 122 (LFGA…ALVG).

FMN is required as a cofactor.

Functionally, flavodoxins are low-potential electron donors to a number of redox enzymes. AvFld 1 is able to donate electrons to the assimilatory nitrate reductase of A.vinelandii to catalyze the reduction of nitrate to nitrite. This is Flavodoxin 1 from Azotobacter vinelandii (strain DJ / ATCC BAA-1303).